The sequence spans 754 residues: Elongation factor G-1, mitochondrial (754 aa).

The transit peptide at 1–17 (MARFPTSPAPNRLLRLF) directs the protein to the mitochondrion. The region spanning 63-340 (DKLRNIGISA…GVVSFLPSPN (278 aa)) is the tr-type G domain. Residues 72-79 (AHIDSGKT), 139-143 (DTPGH), and 193-196 (NKLD) each bind GTP.

This sequence belongs to the TRAFAC class translation factor GTPase superfamily. Classic translation factor GTPase family. EF-G/EF-2 subfamily. As to expression, expressed in cotyledons and adult leaves at the same levels.

The protein localises to the mitochondrion. It participates in protein biosynthesis; polypeptide chain elongation. Functionally, mitochondrial GTPase that catalyzes the GTP-dependent ribosomal translocation step during translation elongation. During this step, the ribosome changes from the pre-translocational (PRE) to the post-translocational (POST) state as the newly formed A-site-bound peptidyl-tRNA and P-site-bound deacylated tRNA move to the P and E sites, respectively. Catalyzes the coordinated movement of the two tRNA molecules, the mRNA and conformational changes in the ribosome. The polypeptide is Elongation factor G-1, mitochondrial (MEFG1) (Arabidopsis thaliana (Mouse-ear cress)).